Here is a 729-residue protein sequence, read N- to C-terminus: MGDEDWEAEIIKPHISSYVPVFEKDRYSSGANGDTFNRTPASSSEMGDGSSRRDHFMRSGFASGRSLGNRDPGESNKRENTSTVGGFGVGKSFGNRGFSNNKFEEGDSSGFWRESSIDCEDNQTRNRGFSKRGGYQDGNDSEALGSSRRGGRGSFRGCRGGFGRGSPNSDYEQDEGTQRSGGIFGSRRSALSGAGNGDTFQSRSGGGSGRGGYKGLNEEVITGSGKNSWKSEAEGGESGDTQGPKVTYIPPPPPEDEDSIFAHYQTGINFDKYDTILVEVSGHDPPPAILTFEEANLCQTLNNNIAKAGYTKLTPVQKYSIPIIQGGRDLMACAQTGSGKTAAFLLPILAHMMRDGITASRFKELQEPECIIVAPTRELINQIYLEARKFSFGTCVRAVVIYGGTQLGHSIRQIVQGCNILCATPGRLMDVIGKEKIGLRQVKYLVLDEADRMLDMGFGPEMKKLISCPGMPSKEQRQTLMFSATFPEEIQRLAGEFLKSNYLFVAVGQVGGACRDVQQTILQVGQYSKREKLVEILRNIGDERTMVFVETKKKADFIATFLCQEKISTTSIHGDREQREREQALGDFRCGKCPVLVATSVAARGLDIENVQHVINFDLPSTIDEYVHRIGRTGRCGNTGRAISFFDLESDSQLAQPLVKVLSDAQQDVPAWLEEIAFSTYGPGFSGNARGNVFASVDTRKNYPGKSSLNTAGFSSTQAPNPVDDESWD.

Residues 22–246 are disordered; it reads FEKDRYSSGA…ESGDTQGPKV (225 aa). Polar residues predominate over residues 29-45; it reads SGANGDTFNRTPASSSE. A compositionally biased stretch (basic and acidic residues) spans 71 to 80; that stretch reads DPGESNKREN. Composition is skewed to gly residues over residues 152–164 and 204–214; these read RGSFRGCRGGFGR and SGGGSGRGGYK. Phosphoserine is present on residues serine 224 and serine 228. Positions 230 to 249 are interaction with RANBP9; that stretch reads KSEAEGGESGDTQGPKVTYI. The short motif at 290–318 is the Q motif element; the sequence is LTFEEANLCQTLNNNIAKAGYTKLTPVQK. The 184-residue stretch at 321–504 folds into the Helicase ATP-binding domain; it reads IPIIQGGRDL…GEFLKSNYLF (184 aa). 334–341 contacts ATP; it reads AQTGSGKT. A DEAD box motif is present at residues 448-451; that stretch reads DEAD. Residues 532 to 677 enclose the Helicase C-terminal domain; the sequence is KLVEILRNIG…DVPAWLEEIA (146 aa). The span at 706–720 shows a compositional bias: polar residues; that stretch reads KSSLNTAGFSSTQAP. A disordered region spans residues 706–729; that stretch reads KSSLNTAGFSSTQAPNPVDDESWD. A Phosphoserine modification is found at serine 727.

This sequence belongs to the DEAD box helicase family. DDX4/VASA subfamily. Found in a mRNP complex, at least composed of TDRD1, TDRD6, TDRD7 and DDX4. Interacts with RANBP9. Interacts with RANBP10. Interacts with PIWIL2 and MAEL. Interacts with BMAL1 and CLOCK. Interacts with Tex19.1 and, probably, Tex19.2. Interacts with RBM46.

The protein localises to the cytoplasm. The protein resides in the perinuclear region. It catalyses the reaction ATP + H2O = ADP + phosphate + H(+). Its function is as follows. ATP-dependent RNA helicase required during spermatogenesis to repress transposable elements and preventing their mobilization, which is essential for the germline integrity. Acts via the piRNA metabolic process, which mediates the repression of transposable elements during meiosis by forming complexes composed of piRNAs and Piwi proteins and governs the methylation and subsequent repression of transposons. Involved in the secondary piRNAs metabolic process, the production of piRNAs in fetal male germ cells through a ping-pong amplification cycle. Required for PIWIL2 slicing-triggered piRNA biogenesis: helicase activity enables utilization of one of the slice cleavage fragments generated by PIWIL2 and processing these pre-piRNAs into piRNAs. The chain is Probable ATP-dependent RNA helicase DDX4 (DDX4) from Bos taurus (Bovine).